Here is a 398-residue protein sequence, read N- to C-terminus: UPF0496 protein At5g66660 (398 aa).

A run of 2 helical transmembrane segments spans residues 240–260 (VFFA…TTMS) and 263–283 (PVVC…GKWF).

This sequence belongs to the UPF0496 family.

It localises to the membrane. The chain is UPF0496 protein At5g66660 from Arabidopsis thaliana (Mouse-ear cress).